A 72-amino-acid polypeptide reads, in one-letter code: uncharacterized protein (72 aa).

At 1–12 the chain is on the cytoplasmic side; sequence MSKHKHEWTESV. A helical transmembrane segment spans residues 13–32; that stretch reads ANSGPASILSYCASSILMTV. The Lumenal segment spans residues 33–46; the sequence is TNKFVVNLDNFNMN. The chain crosses the membrane as a helical span at residues 47-69; sequence FVMLFVQSLVCTVTLCILRIVGV. The Cytoplasmic portion of the chain corresponds to 70-72; sequence ANF.

Belongs to the TPT transporter family. SLC35D subfamily.

The protein localises to the membrane. This is an uncharacterized protein from Saccharomyces cerevisiae (strain RM11-1a) (Baker's yeast).